A 412-amino-acid polypeptide reads, in one-letter code: Serine hydroxymethyltransferase (412 aa).

(6S)-5,6,7,8-tetrahydrofolate is bound by residues Leu117 and 121 to 123 (GHL). An N6-(pyridoxal phosphate)lysine modification is found at Lys226. 349–351 (SPF) contributes to the (6S)-5,6,7,8-tetrahydrofolate binding site.

This sequence belongs to the SHMT family. Homodimer. It depends on pyridoxal 5'-phosphate as a cofactor.

It is found in the cytoplasm. The catalysed reaction is (6R)-5,10-methylene-5,6,7,8-tetrahydrofolate + glycine + H2O = (6S)-5,6,7,8-tetrahydrofolate + L-serine. Its pathway is one-carbon metabolism; tetrahydrofolate interconversion. It participates in amino-acid biosynthesis; glycine biosynthesis; glycine from L-serine: step 1/1. In terms of biological role, catalyzes the reversible interconversion of serine and glycine with tetrahydrofolate (THF) serving as the one-carbon carrier. This reaction serves as the major source of one-carbon groups required for the biosynthesis of purines, thymidylate, methionine, and other important biomolecules. Also exhibits THF-independent aldolase activity toward beta-hydroxyamino acids, producing glycine and aldehydes, via a retro-aldol mechanism. The chain is Serine hydroxymethyltransferase from Nitratidesulfovibrio vulgaris (strain DSM 19637 / Miyazaki F) (Desulfovibrio vulgaris).